A 1112-amino-acid polypeptide reads, in one-letter code: DNA-directed RNA polymerase subunit beta (1112 aa).

The interval 1087–1112 (VGGRRTPNRPTYENIGGPREMEFSED) is disordered.

The protein belongs to the RNA polymerase beta chain family. In terms of assembly, in cyanobacteria the RNAP catalytic core is composed of 2 alpha, 1 beta, 1 beta', 1 gamma and 1 omega subunit. When a sigma factor is associated with the core the holoenzyme is formed, which can initiate transcription.

It carries out the reaction RNA(n) + a ribonucleoside 5'-triphosphate = RNA(n+1) + diphosphate. In terms of biological role, DNA-dependent RNA polymerase catalyzes the transcription of DNA into RNA using the four ribonucleoside triphosphates as substrates. This chain is DNA-directed RNA polymerase subunit beta, found in Gloeobacter violaceus (strain ATCC 29082 / PCC 7421).